We begin with the raw amino-acid sequence, 65 residues long: DNA-directed RNA polymerase subunit Rpo10 (65 aa).

Residues Cys-7, Cys-10, Cys-44, and Cys-45 each coordinate Zn(2+).

It belongs to the archaeal Rpo10/eukaryotic RPB10 RNA polymerase subunit family. In terms of assembly, part of the RNA polymerase complex. Zn(2+) serves as cofactor.

The protein localises to the cytoplasm. It is found in the chromosome. It catalyses the reaction RNA(n) + a ribonucleoside 5'-triphosphate = RNA(n+1) + diphosphate. Functionally, DNA-dependent RNA polymerase (RNAP) catalyzes the transcription of DNA into RNA using the four ribonucleoside triphosphates as substrates. The chain is DNA-directed RNA polymerase subunit Rpo10 from Thermococcus kodakarensis (strain ATCC BAA-918 / JCM 12380 / KOD1) (Pyrococcus kodakaraensis (strain KOD1)).